The sequence spans 299 residues: Protease HtpX homolog (299 aa).

Transmembrane regions (helical) follow at residues 15 to 35 (ILLL…GYLF) and 39 to 59 (GLGG…SMIF). Histidine 143 contacts Zn(2+). Residue glutamate 144 is part of the active site. Position 147 (histidine 147) interacts with Zn(2+). A run of 2 helical transmembrane segments spans residues 158–178 (IAVA…RMMW) and 198–218 (IIML…ATLV). Glutamate 227 provides a ligand contact to Zn(2+).

This sequence belongs to the peptidase M48B family. It depends on Zn(2+) as a cofactor.

The protein resides in the cell membrane. The chain is Protease HtpX homolog from Streptococcus pneumoniae (strain P1031).